A 166-amino-acid chain; its full sequence is Transcription antitermination protein NusB (166 aa).

Over residues 1–18 (MISDESDRFNPRDPKPAD) the composition is skewed to basic and acidic residues. The segment at 1-28 (MISDESDRFNPRDPKPADAGKPSKSAKR) is disordered.

The protein belongs to the NusB family.

In terms of biological role, involved in transcription antitermination. Required for transcription of ribosomal RNA (rRNA) genes. Binds specifically to the boxA antiterminator sequence of the ribosomal RNA (rrn) operons. The chain is Transcription antitermination protein NusB from Pseudomonas putida (strain GB-1).